The chain runs to 340 residues: CRISPR-associated protein Cas7 (340 aa).

In terms of assembly, component of the Cascade-like complex (Cascade I-B), composed of Cas5, Cas6, Cas7 and crRNA.

It localises to the cytoplasm. CRISPR (clustered regularly interspaced short palindromic repeat) is an adaptive immune system that provides protection against mobile genetic elements (viruses, transposable elements and conjugative plasmids). CRISPR clusters contain sequences complementary to antecedent mobile elements and target invading nucleic acids. CRISPR clusters are transcribed and processed into CRISPR RNA (crRNA). Plasmid targeted by CRISPR locus P1 transform wild-type cells very poorly. This protein helps process or stabilize pre-crRNA into individual crRNA units, in vivo Cas6 and Cas7 are also required for optimal crRNA processing and/or stability. This is CRISPR-associated protein Cas7 from Haloferax volcanii (strain ATCC 29605 / DSM 3757 / JCM 8879 / NBRC 14742 / NCIMB 2012 / VKM B-1768 / DS2) (Halobacterium volcanii).